The sequence spans 400 residues: Poly(A) polymerase type 3 (400 aa).

ATP is bound by residues 97–99, threonine 106, 110–112, aspartate 164, lysine 225, tyrosine 234, and 243–244; these read FGS, DID, and GV. Mg(2+) is bound by residues aspartate 110, aspartate 112, and aspartate 164. The Nuclear localization signal motif lies at 382-390; the sequence is GEIINKNKK.

This sequence belongs to the poly(A) polymerase family. In terms of assembly, monomer. The cofactor is Mg(2+). Mn(2+) serves as cofactor.

Its subcellular location is the nucleus. It carries out the reaction RNA(n) + ATP = RNA(n)-3'-adenine ribonucleotide + diphosphate. Its function is as follows. Polymerase that creates the 3'-poly(A) tail of mRNA's. May acquire specificity through interaction with a cleavage and polyadenylation factor (CPSF). This is Poly(A) polymerase type 3 from Xenopus laevis (African clawed frog).